The following is a 208-amino-acid chain: Uracil phosphoribosyltransferase (208 aa).

5-phospho-alpha-D-ribose 1-diphosphate is bound by residues R78, R103, and 130–138; that span reads DPMLATGGT. Uracil-binding positions include I193 and 198–200; that span reads GDA. 5-phospho-alpha-D-ribose 1-diphosphate is bound at residue D199.

Belongs to the UPRTase family. It depends on Mg(2+) as a cofactor.

It carries out the reaction UMP + diphosphate = 5-phospho-alpha-D-ribose 1-diphosphate + uracil. It functions in the pathway pyrimidine metabolism; UMP biosynthesis via salvage pathway; UMP from uracil: step 1/1. Its activity is regulated as follows. Allosterically activated by GTP. Functionally, catalyzes the conversion of uracil and 5-phospho-alpha-D-ribose 1-diphosphate (PRPP) to UMP and diphosphate. The polypeptide is Uracil phosphoribosyltransferase (Blochmanniella floridana).